A 489-amino-acid polypeptide reads, in one-letter code: Cytochrome P450 monooxygenase tazI (489 aa).

Cys-433 serves as a coordination point for heme.

The protein belongs to the cytochrome P450 family. The cofactor is heme.

Its pathway is secondary metabolite biosynthesis. Functionally, cytochrome P450 monooxygenase; part of the gene cluster that mediates the biosynthesis of azaterrilone A and other azaphilones, a class of fungal metabolites characterized by a highly oxygenated pyrano-quinone bicyclic core and exhibiting a broad range of bioactivities. The first step of the pathway begins with the non-reducing polyketide synthase tazA that assembles one acetyl-CoA starter unit, five malonyl-CoA units, and catalyzes a series of Claisen condensations, methylation, PT-mediated cyclization, and finally releases the first hexaketide precursor through the R-domain. The tazA product then undergoes reduction on its terminal ketone and the following pyran-ring formation by yet undetermined enzyme(s). Dehydration and enoyl reduction, possibly involving the trans-enoyl reductase tazE leads to the next intermediate. TazD is predicted as an acetyltransferase and might catalyze the acetylation steps leading to the synthesis of azaterrilone A. Azaterrilone A is not the final product of the taz pathway and both the highly reducing polyketide synthase tazB and the dual enzyme tazHJ catalyze late steps of the pathway, leading to the production of the 2 final stereoisomers that contain additional polyketide modification whose structures have still to be determined. The chain is Cytochrome P450 monooxygenase tazI from Aspergillus terreus (strain NIH 2624 / FGSC A1156).